A 737-amino-acid chain; its full sequence is Phosphoribosylformylglycinamidine synthase subunit PurL (737 aa).

The active site involves histidine 50. Positions 53 and 92 each coordinate ATP. Residue glutamate 94 participates in Mg(2+) binding. Substrate-binding positions include 95-98 and arginine 117; that span reads SHNH. The active-site Proton acceptor is histidine 96. Aspartate 118 serves as a coordination point for Mg(2+). Glutamine 241 is a binding site for substrate. Aspartate 269 is a binding site for Mg(2+). 313–315 is a binding site for substrate; sequence ESQ. The ATP site is built by aspartate 494 and glycine 531. Asparagine 532 contributes to the Mg(2+) binding site. Serine 534 provides a ligand contact to substrate.

Belongs to the FGAMS family. In terms of assembly, monomer. Part of the FGAM synthase complex composed of 1 PurL, 1 PurQ and 2 PurS subunits.

The protein resides in the cytoplasm. The catalysed reaction is N(2)-formyl-N(1)-(5-phospho-beta-D-ribosyl)glycinamide + L-glutamine + ATP + H2O = 2-formamido-N(1)-(5-O-phospho-beta-D-ribosyl)acetamidine + L-glutamate + ADP + phosphate + H(+). Its pathway is purine metabolism; IMP biosynthesis via de novo pathway; 5-amino-1-(5-phospho-D-ribosyl)imidazole from N(2)-formyl-N(1)-(5-phospho-D-ribosyl)glycinamide: step 1/2. Functionally, part of the phosphoribosylformylglycinamidine synthase complex involved in the purines biosynthetic pathway. Catalyzes the ATP-dependent conversion of formylglycinamide ribonucleotide (FGAR) and glutamine to yield formylglycinamidine ribonucleotide (FGAM) and glutamate. The FGAM synthase complex is composed of three subunits. PurQ produces an ammonia molecule by converting glutamine to glutamate. PurL transfers the ammonia molecule to FGAR to form FGAM in an ATP-dependent manner. PurS interacts with PurQ and PurL and is thought to assist in the transfer of the ammonia molecule from PurQ to PurL. The sequence is that of Phosphoribosylformylglycinamidine synthase subunit PurL from Rhodopseudomonas palustris (strain BisA53).